We begin with the raw amino-acid sequence, 220 residues long: Flavin-dependent thymidylate synthase (220 aa).

The ThyX domain occupies 1 to 208 (MKIDILDKGF…PWTFEAFLKY (208 aa)). Residues T55, 78 to 80 (RHR), and E86 contribute to the FAD site. DUMP is bound by residues 75–78 (QWFR), 86–90 (ELSGR), and R147. Positions 78–88 (RHRIASYNELS) match the ThyX motif motif. Residues 163 to 165 (NAR) and N169 contribute to the FAD site. Position 174 (R174) interacts with dUMP. R174 functions as the Involved in ionization of N3 of dUMP, leading to its activation in the catalytic mechanism.

Belongs to the thymidylate synthase ThyX family. Homotetramer. It depends on FAD as a cofactor.

The enzyme catalyses dUMP + (6R)-5,10-methylene-5,6,7,8-tetrahydrofolate + NADPH + H(+) = dTMP + (6S)-5,6,7,8-tetrahydrofolate + NADP(+). The protein operates within pyrimidine metabolism; dTTP biosynthesis. In terms of biological role, catalyzes the reductive methylation of 2'-deoxyuridine-5'-monophosphate (dUMP) to 2'-deoxythymidine-5'-monophosphate (dTMP) while utilizing 5,10-methylenetetrahydrofolate (mTHF) as the methyl donor, and NADPH and FADH(2) as the reductant. This chain is Flavin-dependent thymidylate synthase, found in Thermotoga petrophila (strain ATCC BAA-488 / DSM 13995 / JCM 10881 / RKU-1).